A 179-amino-acid polypeptide reads, in one-letter code: Large ribosomal subunit protein uL10 (179 aa).

The segment at 137-179 (KEELYAMLVGRVKAPITGLVFALSGILRNLVYVLNAIKEKKSE) is binds L7/L12 dimers.

In terms of assembly, part of the ribosomal stalk of the 50S ribosomal subunit. The N-terminus interacts with L11 and 23S rRNA to form the base of the stalk. The C-terminus forms an elongated spine to which 3 L12 dimers bind in a sequential fashion forming a heptameric L10(L12)2(L12)2(L12)2 complex.

In terms of biological role, forms part of the ribosomal stalk, playing a central role in the interaction of the ribosome with GTP-bound translation factors (such as IF-2, EF-Tu, EF-G and RF3). This chain is Large ribosomal subunit protein uL10 (rplJ), found in Thermotoga maritima (strain ATCC 43589 / DSM 3109 / JCM 10099 / NBRC 100826 / MSB8).